The chain runs to 513 residues: Microcin J25-processing protein McjC (513 aa).

The region spanning 176-436 (STIDSIIDNI…FGSDIFWKKT (261 aa)) is the Asparagine synthetase domain.

Its subcellular location is the cytoplasm. Its function is as follows. Along with McjB, necessary and sufficient to process the inactive microcin J25 (McjA) precursor into the active peptide. May be involved in the formation of the amide bond between Gly-38 and Glu-53 of McjA. The protein is Microcin J25-processing protein McjC (mcjC) of Escherichia coli.